Consider the following 452-residue polypeptide: Scaffold protein ILK (452 aa).

The residue at position 1 (M1) is an N-acetylmethionine. ANK repeat units lie at residues 2–30 (DDIF…LNQG), 31–63 (DDHG…INVM), 64–96 (NRGD…INAV), 97–129 (NEHG…VSIC), and 130–174 (NKYG…GTTR). The interval 33–139 (HGFSPLHWAC…NKYGEMPVDK (107 aa)) is interaction with LIMS1. Residue T173 is modified to Phosphothreonine. Positions 180–212 (GTLNKHSGIDFKQLNFLAKLNENHSGELWKGRW) are PH-like; mediates interaction with TGFB1I1. Residue S186 is modified to Phosphoserine. The region spanning 193–446 (LNFLAKLNEN…PKFDMIVPIL (254 aa)) is the Protein kinase domain. N200, N202, H203, and S204 together coordinate ATP. Position 246 is a phosphoserine (S246). Residues H270, M272, and N279 each coordinate ATP. Residue D339 coordinates Mg(2+). Position 341 (K341) interacts with ATP. Positions 363–371 (KKPEDTNRR) match the Nuclear localization signal motif. At K426 the chain carries N6-acetyllysine.

The protein belongs to the protein kinase superfamily. TKL Ser/Thr protein kinase family. Component of the heterotrimeric IPP (ILK-PINCH-PARVIN) complex composed of ILK, LIMS1/PINCH and PARVA; the complex binds to F-actin via the C-terminal tail of LIMS1 and the N-terminal region of PARVA, promoting F-actin filament bundling. Formation of the IPP complex is dependent on protein kinase C and precedes integrin-mediated cell adhesion and spreading. ILK also interacts with LIMS2/PINCH2 and with PARVB and PARVG which may substitute for LIMS1 and PARVA in the IPP complex; PARVA and PARVB compete for the same binding site. Interaction with PARVG promotes the establishment of cell polarity required for leukocyte migration. Interacts with the cytoplasmic domain of integrin ITGB1 and may also interact with integrins ITGB2, ITGB3 and/or ITGB5. Interacts probably also with TGFB1I1. Interacts (via ANK repeats) with EPHA1 (via SAM domain); stimulated by EFNA1 but independent of the kinase activity of EPHA1. Interacts with FERMT2. Interacts with LIMD2; leading to activate the protein kinase activity. Interacts with PXN/PAXILLIN (via LD motif 4). Interacts with CCDC25 (via cytoplasmic region); initiating the ILK-PARVB cascade to induce cytoskeleton rearrangement and directional migration of cells. Interacts with IQGAP1; the interaction is required for localization of IQGAP1 to the cell cortex. Post-translationally, phosphorylation by PAK1 modulates ILK subcellular location by promoting its nuclear export. In terms of tissue distribution, highly expressed in lung, heart, kidney, liver, brain, spleen and skeletal muscle. Weakly expressed in testis.

The protein localises to the cell junction. It localises to the focal adhesion. Its subcellular location is the cell membrane. The protein resides in the cytoplasm. It is found in the myofibril. The protein localises to the sarcomere. It localises to the cell projection. Its subcellular location is the lamellipodium. The protein resides in the nucleus. It is found in the cytoskeleton. The protein localises to the microtubule organizing center. It localises to the centrosome. Its subcellular location is the cell cortex. In terms of biological role, scaffold protein which mediates protein-protein interactions during a range of cellular events including focal adhesion assembly, cell adhesion and cell migration. Regulates integrin-mediated signal transduction by contributing to inside-out integrin activation. Recruits PARVA and LIMS1/PITCH to form the heterotrimeric IPP (ILK-PINCH-PARVIN) complex which binds to F-actin via the C-terminal tail of LIMS1 and the N-terminal region of PARVA, promoting F-actin filament bundling, a process required to generate force for actin cytoskeleton reorganization and subsequent dynamic cell adhesion events such as cell spreading and migration. Binding to PARVA promotes effective assembly of ILK into focal adhesions while PARVA-bound ILK can simultaneously engage integrin-beta cytoplasmic tails to mediate cell adhesion. Plays a role with PARVG in promoting the cell adhesion and spreading of leukocytes. Acts as an upstream effector of both AKT1/PKB and GSK3. Mediates trafficking of caveolae to the cell surface in an ITGB1-dependent manner by promoting the recruitment of IQGAP1 to the cell cortex which cooperates with its effector DIAPH1 to locally stabilize microtubules and allow stable insertion of caveolae into the plasma membrane. Required for the maintenance of mitotic spindle integrity by promoting phosphorylation of TACC3 by AURKA. Associates with chromatin and may act as a negative regulator of transcription when located in the nucleus. This Mus musculus (Mouse) protein is Scaffold protein ILK.